Consider the following 734-residue polypeptide: Photosystem I P700 chlorophyll a apoprotein A2 (734 aa).

8 helical membrane passes run 46 to 69, 135 to 158, 175 to 199, 273 to 291, 330 to 353, 369 to 395, 417 to 439, and 517 to 535; these read IFAS…FHVA, LYSG…LHLQ, LNHH…HVAI, IAHH…GHMY, LHFQ…QHMY, AALY…IFFV, AIIS…LYVH, and FLVH…LILV. 2 residues coordinate [4Fe-4S] cluster: Cys559 and Cys568. The next 2 helical transmembrane spans lie at 575–596 and 643–665; these read AFYL…YWHW and LSVW…MFLI. Residues His654, Met662, and Tyr670 each contribute to the chlorophyll a site. Trp671 is a phylloquinone binding site. The chain crosses the membrane as a helical span at residues 707–727; sequence LVGLVHFTVGYIFTYAAFVIA.

The protein belongs to the PsaA/PsaB family. As to quaternary structure, the PsaA/B heterodimer binds the P700 chlorophyll special pair and subsequent electron acceptors. PSI consists of a core antenna complex that captures photons, and an electron transfer chain that converts photonic excitation into a charge separation. The eukaryotic PSI reaction center is composed of at least 11 subunits. It depends on P700 is a chlorophyll a/chlorophyll a' dimer, A0 is one or more chlorophyll a, A1 is one or both phylloquinones and FX is a shared 4Fe-4S iron-sulfur center. as a cofactor.

The protein resides in the plastid. Its subcellular location is the chloroplast thylakoid membrane. It catalyses the reaction reduced [plastocyanin] + hnu + oxidized [2Fe-2S]-[ferredoxin] = oxidized [plastocyanin] + reduced [2Fe-2S]-[ferredoxin]. In terms of biological role, psaA and PsaB bind P700, the primary electron donor of photosystem I (PSI), as well as the electron acceptors A0, A1 and FX. PSI is a plastocyanin/cytochrome c6-ferredoxin oxidoreductase, converting photonic excitation into a charge separation, which transfers an electron from the donor P700 chlorophyll pair to the spectroscopically characterized acceptors A0, A1, FX, FA and FB in turn. Oxidized P700 is reduced on the lumenal side of the thylakoid membrane by plastocyanin or cytochrome c6. The sequence is that of Photosystem I P700 chlorophyll a apoprotein A2 from Guillardia theta (Cryptophyte).